A 162-amino-acid polypeptide reads, in one-letter code: Large ribosomal subunit protein uL10 (162 aa).

Belongs to the universal ribosomal protein uL10 family. Part of the ribosomal stalk of the 50S ribosomal subunit. The N-terminus interacts with L11 and the large rRNA to form the base of the stalk. The C-terminus forms an elongated spine to which L12 dimers bind in a sequential fashion forming a multimeric L10(L12)X complex.

Its function is as follows. Forms part of the ribosomal stalk, playing a central role in the interaction of the ribosome with GTP-bound translation factors. The polypeptide is Large ribosomal subunit protein uL10 (Vibrio cholerae serotype O1 (strain ATCC 39541 / Classical Ogawa 395 / O395)).